The sequence spans 258 residues: Kallikrein-1 (258 aa).

A signal peptide spans 1–18; the sequence is MWFLVLCLALSLGGTGAA. Positions 19–24 are cleaved as a propeptide — activation peptide; that stretch reads PPIQSR. The 231-residue stretch at 25 to 255 folds into the Peptidase S1 domain; sequence IVGGWECSQP…YVKWIEDTIA (231 aa). 5 disulfide bridges follow: Cys31–Cys170, Cys47–Cys63, Cys149–Cys216, Cys181–Cys195, and Cys206–Cys231. His62 functions as the Charge relay system in the catalytic mechanism. The O-linked (GalNAc...) serine glycan is linked to Ser90. Residue Asn99 is glycosylated (N-linked (GlcNAc...) asparagine). Ser101 carries O-linked (GalNAc...) serine glycosylation. Asn105 carries an N-linked (GlcNAc...) asparagine glycan. Asp117 functions as the Charge relay system in the catalytic mechanism. Residue Asn161 is glycosylated (N-linked (GlcNAc...) asparagine). The O-linked (GalNAc...) serine glycan is linked to Ser163. The Charge relay system role is filled by Ser210.

The protein belongs to the peptidase S1 family. Kallikrein subfamily.

It carries out the reaction Preferential cleavage of Arg-|-Xaa bonds in small molecule substrates. Highly selective action to release kallidin (lysyl-bradykinin) from kininogen involves hydrolysis of Met-|-Xaa or Leu-|-Xaa.. Glandular kallikreins cleave Met-Lys and Arg-Ser bonds in kininogen to release Lys-bradykinin. The chain is Kallikrein-1 (KLK1) from Papio hamadryas (Hamadryas baboon).